Here is a 194-residue protein sequence, read N- to C-terminus: PBAN-type neuropeptides (194 aa).

The N-terminal stretch at 1 to 23 is a signal peptide; sequence MFNQTQLFVFLAVFTTSSVLGNN. The residue at position 47 (L47) is a Leucine amide. Residues 51–94 constitute a propeptide that is removed on maturation; the sequence is SLRISTEDNRQAFFKLLEAADALKYYYDQLPYEMQADEPETRVT. Leucine amide occurs at positions 103, 123, 159, and 169. Residues 172-194 constitute a propeptide that is removed on maturation; sequence ELSYDMMPNKIRVVRSTNKTRST.

Belongs to the pyrokinin family. As to expression, expressed in the subesophageal ganglions. Not found in corpora cardiaca, corpora allata and thoracic ganglia.

It is found in the secreted. Functionally, a hormone that controls sex pheromone production in females and pheromone responsiveness in male. Also mediates visceral muscle contractile activity (myotropic activity). The protein is PBAN-type neuropeptides of Helicoverpa zea (Corn earworm moth).